Reading from the N-terminus, the 212-residue chain is Glycerol-3-phosphate acyltransferase (212 aa).

The next 5 helical transmembrane spans lie at 3-23 (LILL…LWIG), 69-89 (LLPM…FFAI), 110-130 (AGIL…IFFF), 143-163 (VIAA…HFLL), and 165-185 (DYDF…IIRH).

The protein belongs to the PlsY family. In terms of assembly, probably interacts with PlsX.

Its subcellular location is the cell membrane. The enzyme catalyses an acyl phosphate + sn-glycerol 3-phosphate = a 1-acyl-sn-glycero-3-phosphate + phosphate. Its pathway is lipid metabolism; phospholipid metabolism. Functionally, catalyzes the transfer of an acyl group from acyl-phosphate (acyl-PO(4)) to glycerol-3-phosphate (G3P) to form lysophosphatidic acid (LPA). This enzyme utilizes acyl-phosphate as fatty acyl donor, but not acyl-CoA or acyl-ACP. The sequence is that of Glycerol-3-phosphate acyltransferase from Streptococcus mutans serotype c (strain ATCC 700610 / UA159).